Here is a 442-residue protein sequence, read N- to C-terminus: Serine--tRNA ligase (442 aa).

Position 244-246 (244-246 (TAE)) interacts with L-serine. 275 to 277 (RAE) contributes to the ATP binding site. Residue Glu-298 participates in L-serine binding. ATP is bound at residue 365 to 368 (EISS). Ser-400 is a binding site for L-serine.

This sequence belongs to the class-II aminoacyl-tRNA synthetase family. Type-1 seryl-tRNA synthetase subfamily. As to quaternary structure, homodimer. The tRNA molecule binds across the dimer.

The protein localises to the cytoplasm. It carries out the reaction tRNA(Ser) + L-serine + ATP = L-seryl-tRNA(Ser) + AMP + diphosphate + H(+). The catalysed reaction is tRNA(Sec) + L-serine + ATP = L-seryl-tRNA(Sec) + AMP + diphosphate + H(+). It participates in aminoacyl-tRNA biosynthesis; selenocysteinyl-tRNA(Sec) biosynthesis; L-seryl-tRNA(Sec) from L-serine and tRNA(Sec): step 1/1. In terms of biological role, catalyzes the attachment of serine to tRNA(Ser). Is also able to aminoacylate tRNA(Sec) with serine, to form the misacylated tRNA L-seryl-tRNA(Sec), which will be further converted into selenocysteinyl-tRNA(Sec). The chain is Serine--tRNA ligase from Bradyrhizobium sp. (strain BTAi1 / ATCC BAA-1182).